Consider the following 446-residue polypeptide: Phosphoglucosamine mutase (446 aa).

Ser103 serves as the catalytic Phosphoserine intermediate. Positions 103, 242, 244, and 246 each coordinate Mg(2+). Residue Ser103 is modified to Phosphoserine.

Belongs to the phosphohexose mutase family. The cofactor is Mg(2+). Post-translationally, activated by phosphorylation.

It carries out the reaction alpha-D-glucosamine 1-phosphate = D-glucosamine 6-phosphate. In terms of biological role, catalyzes the conversion of glucosamine-6-phosphate to glucosamine-1-phosphate. This chain is Phosphoglucosamine mutase, found in Vibrio cholerae serotype O1 (strain ATCC 39541 / Classical Ogawa 395 / O395).